Consider the following 117-residue polypeptide: Hainantoxin-XV.2 (117 aa).

The N-terminal stretch at 1–20 (MKLCAVIIASLLVCAAVASS) is a signal peptide. The segment at 18–55 (ASSSDNQKEFAQEKEMTREETQSLGEHEKDDEVTGSEE) is disordered. The propeptide occupies 21–56 (SDNQKEFAQEKEMTREETQSLGEHEKDDEVTGSEER). The segment covering 23–55 (NQKEFAQEKEMTREETQSLGEHEKDDEVTGSEE) has biased composition (basic and acidic residues). 4 disulfide bridges follow: cysteine 58-cysteine 72, cysteine 65-cysteine 78, cysteine 69-cysteine 115, and cysteine 71-cysteine 91.

Belongs to the neurotoxin 03 (Tx2) family. 02 subfamily. HNTX-XV sub-subfamily. Expressed by the venom gland.

It localises to the secreted. Functionally, putative ion channel inhibitor. This Cyriopagopus hainanus (Chinese bird spider) protein is Hainantoxin-XV.2.